The chain runs to 240 residues: Uridylate kinase (240 aa).

ATP is bound at residue 15–18; sequence KLSG. The tract at residues 23 to 28 is involved in allosteric activation by GTP; that stretch reads GSEGFG. G57 lines the UMP pocket. Residues G58 and R62 each contribute to the ATP site. UMP contacts are provided by residues D77 and 138 to 145; that span reads TGNPFFTT. Residues T165, Y171, and D174 each contribute to the ATP site.

Belongs to the UMP kinase family. In terms of assembly, homohexamer.

The protein localises to the cytoplasm. It catalyses the reaction UMP + ATP = UDP + ADP. Its pathway is pyrimidine metabolism; CTP biosynthesis via de novo pathway; UDP from UMP (UMPK route): step 1/1. Allosterically activated by GTP. Inhibited by UTP. Its function is as follows. Catalyzes the reversible phosphorylation of UMP to UDP. This Photobacterium profundum (strain SS9) protein is Uridylate kinase.